Here is a 169-residue protein sequence, read N- to C-terminus: Non-specific lipid transfer protein GPI-anchored 11 (169 aa).

The first 23 residues, 1–23, serve as a signal peptide directing secretion; the sequence is MAYATILMIFSVVALMSGERAHA. Cystine bridges form between Cys27-Cys70, Cys37-Cys54, Cys55-Cys95, and Cys68-Cys105. Ser146 carries the GPI-anchor amidated serine lipid modification. The propeptide at 147–169 is removed in mature form; it reads SDASLLSVSFAFVIFMALISSFY.

This sequence belongs to the plant LTP family. Expressed in a vascular-specific manner, mainly in roots, and, to a lower extent, in hypocotyls, seedlings stems and flowers.

It is found in the cell membrane. Its subcellular location is the secreted. Functionally, probable lipid transfer protein. Proteoglycan-like factor that exhibits xylogen activity consisting in mediating local and inductive cell-cell interactions required for xylem differentiation. This is Non-specific lipid transfer protein GPI-anchored 11 from Arabidopsis thaliana (Mouse-ear cress).